A 239-amino-acid chain; its full sequence is 2,3,4,5-tetrahydropyridine-2,6-dicarboxylate N-acetyltransferase (239 aa).

The protein belongs to the transferase hexapeptide repeat family. DapH subfamily.

The enzyme catalyses (S)-2,3,4,5-tetrahydrodipicolinate + acetyl-CoA + H2O = L-2-acetamido-6-oxoheptanedioate + CoA. The protein operates within amino-acid biosynthesis; L-lysine biosynthesis via DAP pathway; LL-2,6-diaminopimelate from (S)-tetrahydrodipicolinate (acetylase route): step 1/3. Catalyzes the transfer of an acetyl group from acetyl-CoA to tetrahydrodipicolinate. In Staphylococcus aureus (strain JH9), this protein is 2,3,4,5-tetrahydropyridine-2,6-dicarboxylate N-acetyltransferase.